The chain runs to 367 residues: Heme A synthase (367 aa).

5 helical membrane-spanning segments follow: residues 25–45, 111–131, 137–157, 174–194, and 211–231; these read AIRI…LVGG, FLAR…VLTG, LWLP…IGWW, LATH…FMRA, and LAGL…LVAG. H274 is a heme binding site. A run of 3 helical transmembrane segments spans residues 276–296, 305–325, and 327–347; these read LGAY…LRAA, SVVL…TLLL, and VPLH…GFAI. H335 serves as a coordination point for heme.

It belongs to the COX15/CtaA family. Type 2 subfamily. Interacts with CtaB. It depends on heme b as a cofactor.

The protein localises to the cell membrane. It catalyses the reaction Fe(II)-heme o + 2 A + H2O = Fe(II)-heme a + 2 AH2. It functions in the pathway porphyrin-containing compound metabolism; heme A biosynthesis; heme A from heme O: step 1/1. Functionally, catalyzes the conversion of heme O to heme A by two successive hydroxylations of the methyl group at C8. The first hydroxylation forms heme I, the second hydroxylation results in an unstable dihydroxymethyl group, which spontaneously dehydrates, resulting in the formyl group of heme A. The chain is Heme A synthase from Rhizobium rhizogenes (strain K84 / ATCC BAA-868) (Agrobacterium radiobacter).